The primary structure comprises 116 residues: Large ribosomal subunit protein uL24 (116 aa).

Belongs to the universal ribosomal protein uL24 family. Part of the 50S ribosomal subunit.

In terms of biological role, one of two assembly initiator proteins, it binds directly to the 5'-end of the 23S rRNA, where it nucleates assembly of the 50S subunit. Its function is as follows. One of the proteins that surrounds the polypeptide exit tunnel on the outside of the subunit. In Protochlamydia amoebophila (strain UWE25), this protein is Large ribosomal subunit protein uL24.